Here is a 615-residue protein sequence, read N- to C-terminus: 70 kDa neurofilament protein (615 aa).

Residues 1–31 (MSVTQKKTEISTTTTYEGESRPSSGMSGFSY) form a disordered region. The tract at residues 1 to 99 (MSVTQKKTEI…KANREREKQD (99 aa)) is head. Positions 21-30 (RPSSGMSGFS) are enriched in polar residues. An IF rod domain is found at 96-449 (EKQDMRDLNE…KLLEGEESRV (354 aa)). The coil 1A stretch occupies residues 100–135 (MRDLNERFANYIEKVRFLEAQNKKLAGELEELKSKW). The tract at residues 136–145 (GKETSAIKEM) is linker 1. Residues 146–284 (YETELEEARK…VHAQELKELA (139 aa)) are coil 1B. The segment at 285–303 (ALAYRDTTAENREFWRNEL) is linker 12. Residues 304–449 (AQAIRDIQQE…KLLEGEESRV (146 aa)) form a coil 2 region. The interval 450 to 615 (GMKQIVEQVV…ANYTQNTVYQ (166 aa)) is tail. The 114-residue stretch at 499–612 (AKTTYQRTSK…EDKANYTQNT (114 aa)) folds into the LTD domain.

The protein belongs to the intermediate filament family.

The polypeptide is 70 kDa neurofilament protein (Doryteuthis pealeii (Longfin inshore squid)).